Consider the following 428-residue polypeptide: Adenylosuccinate synthetase (428 aa).

Residues 12 to 18 (GDEGKGK) and 40 to 42 (GHT) contribute to the GTP site. Catalysis depends on Asp-13, which acts as the Proton acceptor. The Mg(2+) site is built by Asp-13 and Gly-40. Residues 13 to 16 (DEGK), 38 to 41 (NAGH), Thr-129, Arg-143, Gln-224, Thr-239, and Arg-303 contribute to the IMP site. Residue His-41 is the Proton donor of the active site. Position 299–305 (299–305 (VTTGRSR)) interacts with substrate. Residues Arg-305, 331–333 (KLD), and 413–415 (GVG) contribute to the GTP site.

This sequence belongs to the adenylosuccinate synthetase family. In terms of assembly, homodimer. It depends on Mg(2+) as a cofactor.

The protein localises to the cytoplasm. It carries out the reaction IMP + L-aspartate + GTP = N(6)-(1,2-dicarboxyethyl)-AMP + GDP + phosphate + 2 H(+). The protein operates within purine metabolism; AMP biosynthesis via de novo pathway; AMP from IMP: step 1/2. Its function is as follows. Plays an important role in the de novo pathway of purine nucleotide biosynthesis. Catalyzes the first committed step in the biosynthesis of AMP from IMP. The chain is Adenylosuccinate synthetase from Saccharopolyspora erythraea (strain ATCC 11635 / DSM 40517 / JCM 4748 / NBRC 13426 / NCIMB 8594 / NRRL 2338).